Consider the following 429-residue polypeptide: Adenylosuccinate synthetase (429 aa).

Residues 12–18 and 40–42 each bind GTP; these read GDEGKGK and GHT. Asp-13 (proton acceptor) is an active-site residue. Residues Asp-13 and Gly-40 each contribute to the Mg(2+) site. Residues 13 to 16, 38 to 41, Thr-129, Arg-143, Gln-223, Thr-238, and Arg-302 each bind IMP; these read DEGK and NAGH. Catalysis depends on His-41, which acts as the Proton donor. Residue 298 to 304 participates in substrate binding; sequence TVTGRRR. GTP is bound by residues Arg-304, 330 to 332, and 412 to 414; these read KLD and STS.

It belongs to the adenylosuccinate synthetase family. Homodimer. It depends on Mg(2+) as a cofactor.

The protein localises to the cytoplasm. It catalyses the reaction IMP + L-aspartate + GTP = N(6)-(1,2-dicarboxyethyl)-AMP + GDP + phosphate + 2 H(+). It participates in purine metabolism; AMP biosynthesis via de novo pathway; AMP from IMP: step 1/2. Functionally, plays an important role in the de novo pathway of purine nucleotide biosynthesis. Catalyzes the first committed step in the biosynthesis of AMP from IMP. The polypeptide is Adenylosuccinate synthetase (Zymomonas mobilis subsp. mobilis (strain ATCC 31821 / ZM4 / CP4)).